The chain runs to 311 residues: CD-NTase-associated protein 12 (311 aa).

Positions 4-121 (RIFIGSSKEG…LLGITVPQFE (118 aa)) constitute a TIR domain. Positions 157 to 311 (STVLAIGYFY…RNIVKIIQEE (155 aa)) are STING domain. Positions 168, 232, and 249 each coordinate 3',3'-c-di-GMP.

It in the C-terminal section; belongs to the bacterial STING family. As to quaternary structure, forms homodimers; in the presence of c-di-GMP forms filaments with an ordered array of parallel-stacked subunits.

It carries out the reaction NAD(+) + H2O = ADP-D-ribose + nicotinamide + H(+). NAD(+) hydrolase activity is strongly stimulated by c-di-GMP, weakly by 3'3'-cGAMP, very weakly by c-di-AMP but not at all by 2'3'-cGAMP. Self-association of TIR domains is required for NADase activity. Functionally, effector protein of a CBASS antiviral system with NAD(+) hydrolase activity. CBASS (cyclic oligonucleotide-based antiphage signaling system) provides immunity against bacteriophage. The CD-NTase protein synthesizes cyclic nucleotides in response to infection; these serve as specific second messenger signals. The signals activate a diverse range of effectors, leading to bacterial cell death and thus abortive phage infection. A type I-D CBASS(GG) system. Its function is as follows. Binds c-di-GMP, does not bind cUMP-AMP. Upon activation by c-di-GMP forms filaments which hydrolyze NAD(+); filament formation is required for enzyme activation. This Flavobacterium daejeonense protein is CD-NTase-associated protein 12.